The following is a 123-amino-acid chain: Large ribosomal subunit protein uL24 (123 aa).

Belongs to the universal ribosomal protein uL24 family. In terms of assembly, part of the 50S ribosomal subunit.

Its function is as follows. One of two assembly initiator proteins, it binds directly to the 5'-end of the 23S rRNA, where it nucleates assembly of the 50S subunit. In terms of biological role, one of the proteins that surrounds the polypeptide exit tunnel on the outside of the subunit. This Solibacter usitatus (strain Ellin6076) protein is Large ribosomal subunit protein uL24.